A 164-amino-acid chain; its full sequence is Phosphopantetheine adenylyltransferase (164 aa).

Serine 9 is a substrate binding site. ATP contacts are provided by residues 9-10 and histidine 17; that span reads SF. Positions 41, 78, and 92 each coordinate substrate. ATP is bound by residues 93 to 95, glutamate 103, and 128 to 134; these read GLR and VRTITAT.

This sequence belongs to the bacterial CoaD family. As to quaternary structure, homohexamer. The cofactor is Mg(2+).

The protein resides in the cytoplasm. It carries out the reaction (R)-4'-phosphopantetheine + ATP + H(+) = 3'-dephospho-CoA + diphosphate. Its pathway is cofactor biosynthesis; coenzyme A biosynthesis; CoA from (R)-pantothenate: step 4/5. Its function is as follows. Reversibly transfers an adenylyl group from ATP to 4'-phosphopantetheine, yielding dephospho-CoA (dPCoA) and pyrophosphate. The chain is Phosphopantetheine adenylyltransferase from Brucella abortus (strain 2308).